The sequence spans 1214 residues: Delta-latroinsectotoxin-Lt1a (1214 aa).

Residues 64–89 (IGSIPVIGEVVGIVTAPIAIVSHITS) are helix H2 is the probable transmembrane region of the tetrameric pore inserted in the target cell membrane. Positions 250–269 (ALYALFYGTQTYAAVMFFLL) are helix H8 is the probable transmembrane region of the tetrameric pore inserted in the target cell membrane. ANK repeat units lie at residues 464-497 (DIHR…DIEA), 501-532 (NDRS…DIEL), 536-565 (NGFT…DVNA), 570-600 (TNLT…KVNE), 604-633 (DGFT…DKNA), 637-666 (SGLT…DLNI), 670-699 (NHMA…KVSI), 706-734 (NNWT…DINL), 740-769 (GNLT…NIEE), 773-802 (EGYT…DIEA), 806-835 (DNLT…DIGA), 839-868 (DGST…NLKE), 872-901 (NKYL…SLKD), 906-936 (EGRT…TLDE), and 966-994 (VKPT…PEGS). Residues 1020 to 1214 (IVKETNSRYL…IDVHQKMFLR (195 aa)) constitute a propeptide, C-terminal domain cleavage is required for toxin activation.

This sequence belongs to the cationic peptide 01 (latrotoxin) family. 04 (delta-latroinsectotoxin) subfamily. As to quaternary structure, homotetramer in membrane. Expressed by the venom gland.

Its subcellular location is the secreted. It is found in the target cell membrane. Functionally, insecticidal presynaptic neurotoxin that induces massive neurotransmitter release at insect (but not vertebrate) neuromuscular junctions. Native toxin forms cation-permeable pores (with high permeability to calcium) in lipid membranes locust muscle membrane and artificial lipid bilayers. May bind to insect neurexin-1 homolog, insect adhesion G protein-coupled receptor L1 homolog, and insect receptor-type tyrosine-protein phosphatase S homolog, and induces neurotransmitter exocytosis both by forming tetrameric pores in membranes and signaling via G protein-coupled receptor. Oligomerization is a process independent of divalent cations. This Latrodectus tredecimguttatus (Mediterranean black widow spider) protein is Delta-latroinsectotoxin-Lt1a.